The sequence spans 26 residues: Dermaseptin-J4 (26 aa).

Valine amide is present on Val26.

As to expression, expressed by the skin glands.

The protein resides in the secreted. In terms of biological role, has antimicrobial activity. The chain is Dermaseptin-J4 from Phasmahyla jandaia (Jandaia leaf frog).